Reading from the N-terminus, the 138-residue chain is Cofilin (138 aa).

The 135-residue stretch at 2–136 (SSGVQPTQEC…TKDALFEKAT (135 aa)) folds into the ADF-H domain.

It belongs to the actin-binding proteins ADF family.

The protein resides in the cytoplasm. The protein localises to the cytoskeleton. It is found in the nucleus matrix. Functionally, controls reversibly actin polymerization and depolymerization in a pH-sensitive manner. It has the ability to bind G- and F-actin in a 1:1 ratio of cofilin to actin. Binding to F-actin is regulated by tropomyosin. It is the major component of intranuclear and cytoplasmic actin rods. Required for accumulation of actin at the cell division site via depolymerizing actin at the cell ends. In association with myosin II has a role in the assembly of the contractile ring via severing actin filaments. Involved in the maintenance of the contractile ring once formed. In association with profilin and capping protein, has a role in the mitotic reorganization of the actin cytoskeleton. The protein is Cofilin (COF1) of Cryptococcus neoformans var. neoformans serotype D (strain B-3501A) (Filobasidiella neoformans).